A 313-amino-acid polypeptide reads, in one-letter code: MPTEFLYTSKIAAISWAATGGRQQRVYFQDLNGKIREAQRGGDNPWTGGSSQNVIGEAKLFSPLAAVTWKSAQGIQIRVYCVNKDNILSEFVYDGSKWITGQLGSVGVKVGSNSKLAALQWGGSESAPPNIRVYYQKSNGSGSSIHEYVWSGKWTAGASFGSTVPGTGIGATAIGPGRLRIYYQATDNKIREHCWDSNSWYVGGFSASASAGVSIAAISWGSTPNIRVYWQKGREELYEAAYGGSWNTPGQIKDASRPTPSLPDTFIAANSSGNIDISVFFQASGVSLQQWQWISGKGWSIGAVVPTGTPAGW.

Repeat copies occupy residues 5 to 57, 58 to 109, 110 to 162, 163 to 208, 209 to 260, and 261 to 304. The tract at residues 5-304 is 6 X approximate tandem repeats; it reads FLYTSKIAAI…SGKGWSIGAV (300 aa). Residues Arg25, Glu37, Arg78, Glu90, Trp98, Gln102, Arg132, Glu147, and Trp154 each contribute to the beta-L-fucose site. Alpha-L-fucose-binding residues include Arg78 and Glu90. Gln102 is a binding site for alpha-L-fucose. The alpha-L-fucose site is built by Trp154, Arg180, and Glu192. Trp200 is a beta-L-fucose binding site. Gly204 contributes to the alpha-L-fucose binding site. Beta-L-fucose contacts are provided by Arg227 and Glu239. Trp246 provides a ligand contact to alpha-L-fucose. Trp299 contributes to the beta-L-fucose binding site.

The protein belongs to the fungal fucose-specific lectin family. As to quaternary structure, forms homodimers. The two AAL monomers are associated via interactions between N-terminal and C-terminal peptides. Tyr-7 interacts via aromatic ring stacking with its counterpart on the other monomer, whereas Ser-284 interacts via hydrogen bonding with Asp-264 on the other monomer.

Functionally, lectin that specifically binds to L-fucose. Has strongest preference for the alpha-1,6-fucosylated chain (core fucose) on glycoproteins among alpha-1,2-, alpha-1,3-, alpha-1,4-, and alpha-1,6-fucosylated chains. Might play a role in the differentiation of the fruiting body. Exhibits antifungal activity against Mucor racemosus and thus could act as an antifungal protein in natural ecosystems. In Aleuria aurantia (Orange peel mushroom), this protein is Fucose-specific lectin.